The sequence spans 38 residues: Cytochrome b559 subunit beta (38 aa).

Residues 13 to 29 (WLAVHALAVPTVFFLGS) form a helical membrane-spanning segment. His-17 is a heme binding site.

The protein belongs to the PsbE/PsbF family. Heterodimer of an alpha subunit and a beta subunit. PSII is composed of 1 copy each of membrane proteins PsbA, PsbB, PsbC, PsbD, PsbE, PsbF, PsbH, PsbI, PsbJ, PsbK, PsbL, PsbM, PsbT, PsbX, PsbY, PsbZ, Psb30/Ycf12, at least 3 peripheral proteins of the oxygen-evolving complex and a large number of cofactors. It forms dimeric complexes. Heme b is required as a cofactor.

Its subcellular location is the plastid. It localises to the chloroplast thylakoid membrane. Functionally, this b-type cytochrome is tightly associated with the reaction center of photosystem II (PSII). PSII is a light-driven water:plastoquinone oxidoreductase that uses light energy to abstract electrons from H(2)O, generating O(2) and a proton gradient subsequently used for ATP formation. It consists of a core antenna complex that captures photons, and an electron transfer chain that converts photonic excitation into a charge separation. The sequence is that of Cytochrome b559 subunit beta from Ostreococcus tauri.